A 269-amino-acid polypeptide reads, in one-letter code: Ribonuclease HII (269 aa).

The RNase H type-2 domain occupies 79 to 269 (TYLAGADEVG…SFLKNILNTF (191 aa)). A divalent metal cation contacts are provided by Asp-85, Glu-86, and Asp-182.

It belongs to the RNase HII family. Requires Mn(2+) as cofactor. The cofactor is Mg(2+).

It is found in the cytoplasm. The catalysed reaction is Endonucleolytic cleavage to 5'-phosphomonoester.. Its function is as follows. Endonuclease that specifically degrades the RNA of RNA-DNA hybrids. The protein is Ribonuclease HII of Clostridium novyi (strain NT).